The following is a 147-amino-acid chain: Acidic phospholipase A2 S7-48J (147 aa).

Positions 1-19 (MYPAHLLVLLAVCVSLLGA) are cleaved as a signal peptide. Residues 20–27 (SDIPPQPL) constitute a propeptide that is removed on maturation. Intrachain disulfides connect Cys-38-Cys-99, Cys-54-Cys-146, Cys-56-Cys-72, Cys-71-Cys-127, Cys-78-Cys-120, Cys-88-Cys-113, and Cys-106-Cys-118. Ca(2+)-binding residues include Tyr-55, Gly-57, and Gly-59. The active site involves His-75. Asp-76 contacts Ca(2+). The active site involves Asp-121.

Belongs to the phospholipase A2 family. Group I subfamily. D49 sub-subfamily. Ca(2+) serves as cofactor. Expressed by the venom gland.

It is found in the secreted. It catalyses the reaction a 1,2-diacyl-sn-glycero-3-phosphocholine + H2O = a 1-acyl-sn-glycero-3-phosphocholine + a fatty acid + H(+). Functionally, snake venom phospholipase A2 (PLA2) that inhibits collagen-induced platelet aggregation. PLA2 catalyzes the calcium-dependent hydrolysis of the 2-acyl groups in 3-sn-phosphoglycerides. The chain is Acidic phospholipase A2 S7-48J from Austrelaps superbus (Lowland copperhead snake).